A 247-amino-acid polypeptide reads, in one-letter code: MSGHSKWATIKHAKGAADAKRGQLFTKFIKEISIAAKMGGGDPATNPRLRTAVLKARAANMPKDNIERAIKKGTGELGAVNYEELLYEGYGPGGVAVLVEVLTDNKNRTAASVRNIFTKSGGNLGATGSVAYMFNRKGVIEYDAEVVSEEAIMEAALEAGAEDIATEDGVITVTTDPNDFASVLEALQEKGFESVSAAVSMVPDTYVALDADTTQKALKMIDKLEEDDDVQTVSSNIEIPEGFEMPE.

Belongs to the TACO1 family.

Its subcellular location is the cytoplasm. This chain is Probable transcriptional regulatory protein TDE_1487, found in Treponema denticola (strain ATCC 35405 / DSM 14222 / CIP 103919 / JCM 8153 / KCTC 15104).